The sequence spans 572 residues: Proline--tRNA ligase (572 aa).

Belongs to the class-II aminoacyl-tRNA synthetase family. ProS type 1 subfamily. In terms of assembly, homodimer.

Its subcellular location is the cytoplasm. It carries out the reaction tRNA(Pro) + L-proline + ATP = L-prolyl-tRNA(Pro) + AMP + diphosphate. Its function is as follows. Catalyzes the attachment of proline to tRNA(Pro) in a two-step reaction: proline is first activated by ATP to form Pro-AMP and then transferred to the acceptor end of tRNA(Pro). As ProRS can inadvertently accommodate and process non-cognate amino acids such as alanine and cysteine, to avoid such errors it has two additional distinct editing activities against alanine. One activity is designated as 'pretransfer' editing and involves the tRNA(Pro)-independent hydrolysis of activated Ala-AMP. The other activity is designated 'posttransfer' editing and involves deacylation of mischarged Ala-tRNA(Pro). The misacylated Cys-tRNA(Pro) is not edited by ProRS. This Klebsiella pneumoniae (strain 342) protein is Proline--tRNA ligase.